The following is a 330-amino-acid chain: Lipoyl synthase (330 aa).

[4Fe-4S] cluster contacts are provided by Cys77, Cys82, Cys88, Cys103, Cys107, Cys110, and Ser317. A Radical SAM core domain is found at 89–306 (FNHGTATFMI…RSEAERMGFE (218 aa)).

Belongs to the radical SAM superfamily. Lipoyl synthase family. It depends on [4Fe-4S] cluster as a cofactor.

The protein resides in the cytoplasm. It catalyses the reaction [[Fe-S] cluster scaffold protein carrying a second [4Fe-4S](2+) cluster] + N(6)-octanoyl-L-lysyl-[protein] + 2 oxidized [2Fe-2S]-[ferredoxin] + 2 S-adenosyl-L-methionine + 4 H(+) = [[Fe-S] cluster scaffold protein] + N(6)-[(R)-dihydrolipoyl]-L-lysyl-[protein] + 4 Fe(3+) + 2 hydrogen sulfide + 2 5'-deoxyadenosine + 2 L-methionine + 2 reduced [2Fe-2S]-[ferredoxin]. It participates in protein modification; protein lipoylation via endogenous pathway; protein N(6)-(lipoyl)lysine from octanoyl-[acyl-carrier-protein]: step 2/2. Functionally, catalyzes the radical-mediated insertion of two sulfur atoms into the C-6 and C-8 positions of the octanoyl moiety bound to the lipoyl domains of lipoate-dependent enzymes, thereby converting the octanoylated domains into lipoylated derivatives. This Actinobacillus pleuropneumoniae serotype 5b (strain L20) protein is Lipoyl synthase.